A 295-amino-acid chain; its full sequence is Small ribosomal subunit protein uS2 (295 aa).

Belongs to the universal ribosomal protein uS2 family.

This is Small ribosomal subunit protein uS2 from Rickettsia typhi (strain ATCC VR-144 / Wilmington).